Reading from the N-terminus, the 111-residue chain is CRIB domain-containing protein RIC2 (111 aa).

The CRIB domain occupies 71–84 (IGFPTDVKHLSHIG).

In terms of assembly, interacts with ARAC11/ROP1. Expressed in roots, leaves, stems, flowers, siliques and pollen.

It localises to the cell membrane. Functions as a downstream effector of Rho-related GTP binding proteins of the 'Rho of Plants' (ROPs) family. Participates in the propagation of ROP GTPase signals in specific cellular responses. Is involved in pollen tube growth regulation through its interaction with ARAC11/ROP1. The chain is CRIB domain-containing protein RIC2 (RIC2) from Arabidopsis thaliana (Mouse-ear cress).